The sequence spans 245 residues: 14-3-3 protein theta (245 aa).

It belongs to the 14-3-3 family. Homodimer, and heterodimer with other family members.

The protein resides in the cytoplasm. Its function is as follows. Adapter protein implicated in the regulation of a large spectrum of both general and specialized signaling pathways. Binds to a large number of partners, usually by recognition of a phosphoserine or phosphothreonine motif. Binding generally results in the modulation of the activity of the binding partner. This is 14-3-3 protein theta (YWHAQ) from Gallus gallus (Chicken).